Consider the following 307-residue polypeptide: Universal stress protein A family protein C25B2.10 (307 aa).

Residues 1 to 63 (MSESAPAGSK…RSSMEQPTFR (63 aa)) form a disordered region. Over residues 21 to 30 (PEPRTSKDQQ) the composition is skewed to basic and acidic residues. The residue at position 44 (Ser-44) is a Phosphoserine. Thr-48 bears the Phosphothreonine mark. Phosphoserine is present on residues Ser-98 and Ser-102.

It belongs to the universal stress protein A family.

The protein resides in the barrier septum. The protein localises to the cell tip. The chain is Universal stress protein A family protein C25B2.10 from Schizosaccharomyces pombe (strain 972 / ATCC 24843) (Fission yeast).